Here is a 377-residue protein sequence, read N- to C-terminus: Nitric oxide reductase FlRd-NAD(+) reductase (377 aa).

This sequence belongs to the FAD-dependent oxidoreductase family. The cofactor is FAD.

The protein resides in the cytoplasm. The catalysed reaction is 2 reduced [nitric oxide reductase rubredoxin domain] + NAD(+) + H(+) = 2 oxidized [nitric oxide reductase rubredoxin domain] + NADH. It participates in nitrogen metabolism; nitric oxide reduction. In terms of biological role, one of at least two accessory proteins for anaerobic nitric oxide (NO) reductase. Reduces the rubredoxin moiety of NO reductase. The polypeptide is Nitric oxide reductase FlRd-NAD(+) reductase (norW) (Shigella boydii serotype 4 (strain Sb227)).